A 493-amino-acid chain; its full sequence is Leucine-rich repeat-containing protein 14 (493 aa).

The LRR 1; degenerate repeat unit spans residues 111–146 (KHTLRVLDMTGLLDDGVEQDPGTMSMWDCTAAVART). Residues 194-218 (RLCCRDLRAEDLPMRNTVALLQLLD) form an LRR 2; degenerate repeat. One copy of the LRR 3; degenerate repeat lies at 219-246 (AGCLRRIDLRFNNLGLRGLSVIIPHVAR). The stretch at 247 to 282 (FQHLASLRLHYVHGDSRQPSVDGEDNFRYFLAQMGR) is one LRR 4; degenerate repeat. 5 LRR repeats span residues 283 to 307 (FICL…LSTL), 308 to 339 (QRPL…AHLK), 340 to 360 (KLDL…QGLL), 364 to 391 (AATL…TLTR), and 392 to 416 (CASL…LLRD).

This sequence belongs to the PRAME family. LRRC14 subfamily. In terms of assembly, interacts with IKBKB; disrupts IKBKB-IKBKG interaction preventing I-kappa-B-kinase (IKK) core complex formation and leading to a decrease of IKBKB phosphorylation and NF-kappaB activation. Interacts with CHUK.

The protein resides in the cytoplasm. Functionally, negatively regulates Toll-like receptor-mediated NF-kappa-B signaling by disrupting IKK core complex formation through interaction with IKBKB. This chain is Leucine-rich repeat-containing protein 14, found in Rattus norvegicus (Rat).